The sequence spans 93 residues: Large ribosomal subunit protein uL23cz/uL23cy (93 aa).

Belongs to the universal ribosomal protein uL23 family. In terms of assembly, part of the 50S ribosomal subunit.

It is found in the plastid. The protein localises to the chloroplast. Functionally, binds to 23S rRNA. The chain is Large ribosomal subunit protein uL23cz/uL23cy (rpl23-A) from Citrus sinensis (Sweet orange).